A 55-amino-acid polypeptide reads, in one-letter code: Large ribosomal subunit protein bL33 (55 aa).

Belongs to the bacterial ribosomal protein bL33 family.

This is Large ribosomal subunit protein bL33 from Novosphingobium aromaticivorans (strain ATCC 700278 / DSM 12444 / CCUG 56034 / CIP 105152 / NBRC 16084 / F199).